The following is a 341-amino-acid chain: Pectate trisaccharide-lyase (341 aa).

The first 27 residues, 1–27, serve as a signal peptide directing secretion; it reads MKKLISIIFIFVLGVVGSLTAAVSAEA. A propeptide spanning residues 28 to 39 is cleaved from the precursor; that stretch reads ASALNSGKVNPL. 2 PbH1 repeats span residues 131–156 and 158–186; these read ANNI…GIEG and SKNI…FDVK. The Ca(2+) site is built by D150, D180, and D184. R233 is a catalytic residue. PbH1 repeat units lie at residues 262 to 283 and 287 to 322; these read GARI…VSWY and PGYW…SLDN.

It belongs to the polysaccharide lyase 1 family. Requires Ca(2+) as cofactor.

The protein resides in the secreted. The catalysed reaction is eliminative cleavage of unsaturated trigalacturonate as the major product from the reducing end of polygalacturonic acid/pectate.. Functionally, cleaves unsaturated oligo-galacturonides from pectin. The major product is trigalacturonate; digalacturonate and tetragalacturonate are also produced. Activity on methylated pectins decreases with an increasing degree of methylation. The protein is Pectate trisaccharide-lyase of Bacillus licheniformis (strain ATCC 14580 / DSM 13 / JCM 2505 / CCUG 7422 / NBRC 12200 / NCIMB 9375 / NCTC 10341 / NRRL NRS-1264 / Gibson 46).